Reading from the N-terminus, the 319-residue chain is Iron-sulfur cluster transfer protein NUBPL (319 aa).

The N-terminal 38 residues, 1–38 (MGTWRRLLLFGGVSLRGGGAATVPPRGCRALGCGRQLL), are a transit peptide targeting the mitochondrion. 75 to 82 (GKGGVGKS) contacts ATP.

The protein belongs to the Mrp/NBP35 ATP-binding proteins family. [4Fe-4S] cluster is required as a cofactor.

Its subcellular location is the mitochondrion. In terms of biological role, iron-sulfur cluster transfer protein involved in the assembly of the mitochondrial membrane respiratory chain NADH dehydrogenase (Complex I). May deliver one or more Fe-S clusters to complex I subunits. In Mus musculus (Mouse), this protein is Iron-sulfur cluster transfer protein NUBPL (Nubpl).